We begin with the raw amino-acid sequence, 322 residues long: tRNA (guanine-N(7)-)-methyltransferase (322 aa).

S-adenosyl-L-methionine contacts are provided by Glu29, Glu55, and Asp105. Asp105 is an active-site residue. Substrate is bound by residues Lys109 and Asp141.

Belongs to the class I-like SAM-binding methyltransferase superfamily. TrmB family.

The enzyme catalyses guanosine(46) in tRNA + S-adenosyl-L-methionine = N(7)-methylguanosine(46) in tRNA + S-adenosyl-L-homocysteine. Its pathway is tRNA modification; N(7)-methylguanine-tRNA biosynthesis. Its function is as follows. Catalyzes the formation of N(7)-methylguanine at position 46 (m7G46) in tRNA. The protein is tRNA (guanine-N(7)-)-methyltransferase of Deinococcus radiodurans (strain ATCC 13939 / DSM 20539 / JCM 16871 / CCUG 27074 / LMG 4051 / NBRC 15346 / NCIMB 9279 / VKM B-1422 / R1).